The primary structure comprises 241 residues: Centromere protein H (241 aa).

At M1 the chain carries N-acetylmethionine. A disordered region spans residues 1–24 (MEEQPRERSEAGAEACEEKRGLSQ). The stretch at 28–186 (ERIEDRISLL…KEDVDKMENS (159 aa)) forms a coiled coil. A Glycyl lysine isopeptide (Lys-Gly) (interchain with G-Cter in SUMO2) cross-link involves residue K61. T62 is modified (phosphothreonine).

The protein belongs to the CENP-H/MCM16 family. Self-associates. Component of the CENPA-NAC complex, at least composed of CENPA, CENPC, CENPH, CENPM, CENPN, CENPT and CENPU. The CENPA-NAC complex interacts with the CENPA-CAD complex, composed of CENPI, CENPK, CENPL, CENPO, CENPP, CENPQ, CENPR and CENPS. Interacts directly with CENPK. Interacts with KIF2C and NDC80. Interacts with TRIM36. Abundantly expressed in thymus, spleen, uterus, ovary, testis and muscle, and weakly expressed in small intestine, lung and stomach. Barely detectable expression in kidney, liver, skin and prostate gland. Not detected in brain, heart or adrenal gland. Also expressed weakly in various hematopoietic cell lines.

Its subcellular location is the nucleus. It localises to the chromosome. The protein resides in the centromere. The protein localises to the kinetochore. Functionally, component of the CENPA-NAC (nucleosome-associated) complex, a complex that plays a central role in assembly of kinetochore proteins, mitotic progression and chromosome segregation. The CENPA-NAC complex recruits the CENPA-CAD (nucleosome distal) complex and may be involved in incorporation of newly synthesized CENPA into centromeres. Required for chromosome congression and efficiently align the chromosomes on a metaphase plate. The chain is Centromere protein H from Mus musculus (Mouse).